A 248-amino-acid polypeptide reads, in one-letter code: MKPLRLLSTDLDGTVVGDNDATRRFRDFWHALPDDLRPVLVFNSGRLIDDQLALLEEVPLPQPDYIIGGVGTMLHAKKRSELETAYTQSLGTGFDPRKIADVMNRIAGVTMQEERYQHGLKSSWFLHDADAAALGEIEAALLAADIDARIVYSSDRDLDILPKAADKGAALAWLCGQLRIGLDESVVSGDTGNDRAMFELKTIRGVIVGNALPELVSLAHQDNRFFHSTAKEADGVIEGLRHWGLNPR.

This sequence belongs to the sucrose phosphatase family.

It carries out the reaction beta-D-fructofuranosyl alpha-D-mannopyranoside 6(F)-phosphate + H2O = beta-D-fructofuranosyl alpha-D-mannopyranoside + phosphate. It functions in the pathway carbohydrate metabolism; mannosylfructose biosynthesis; beta-D-fructofuranosyl alpha-D-mannopyranoside from D-fructose 6-phosphate and GDP-alpha-D-mannose: step 2/2. Inhibited by the phosphatase inhibitors fluoride, molybdate and orthovanadate. This Agrobacterium fabrum (strain C58 / ATCC 33970) (Agrobacterium tumefaciens (strain C58)) protein is Mannosylfructose-phosphate phosphatase.